Consider the following 531-residue polypeptide: Zinc finger protein 692 (531 aa).

The segment covering glutamate 155–serine 178 has biased composition (basic and acidic residues). Disordered regions lie at residues glutamate 155–leucine 249 and methionine 287–aspartate 307. The span at leucine 186 to leucine 206 shows a compositional bias: acidic residues. Serine 231 is modified (phosphoserine). The segment covering serine 290–asparagine 303 has biased composition (polar residues). 5 C2H2-type zinc fingers span residues methionine 327 to histidine 352, phenylalanine 358 to histidine 382, tyrosine 388 to histidine 410, leucine 416 to histidine 438, and phenylalanine 447 to histidine 470. Serine 469 bears the Phosphoserine mark. Residues leucine 474 to serine 531 are disordered. Residues leucine 483–glutamate 499 are compositionally biased toward polar residues. The segment covering serine 502–proline 520 has biased composition (low complexity).

This sequence belongs to the krueppel C2H2-type zinc-finger protein family. In terms of processing, phosphorylation at Ser-469 results in loss of DNA-binding activity.

The protein resides in the nucleus. May act as an transcriptional repressor for PCK1 gene expression, in turn may participate in the hepatic gluconeogenesis regulation through the activated AMPK signaling pathway. This Mus musculus (Mouse) protein is Zinc finger protein 692.